The primary structure comprises 353 residues: Photosystem II protein D1 (353 aa).

Threonine 2 bears the N-acetylthreonine mark. Residue threonine 2 is modified to Phosphothreonine. The next 3 helical transmembrane spans lie at 29–46, 118–133, and 142–156; these read YIGW…TATS, HFLL…EWEL, and WIAV…AATA. A chlorophyll a-binding site is contributed by histidine 118. Position 126 (tyrosine 126) interacts with pheophytin a. [CaMn4O5] cluster-binding residues include aspartate 170 and glutamate 189. A helical transmembrane segment spans residues 197-218; it reads FHMLGVAGVFGGSLFSAMHGSL. Histidine 198 contributes to the chlorophyll a binding site. Residues histidine 215 and 264–265 each bind a quinone; that span reads SF. Residue histidine 215 participates in Fe cation binding. Histidine 272 contributes to the Fe cation binding site. The helical transmembrane segment at 274-288 threads the bilayer; sequence FLAAWPVVGIWFTAL. Histidine 332, glutamate 333, aspartate 342, and alanine 344 together coordinate [CaMn4O5] cluster. The propeptide occupies 345–353; it reads AVEAPSTIG.

The protein belongs to the reaction center PufL/M/PsbA/D family. As to quaternary structure, PSII is composed of 1 copy each of membrane proteins PsbA, PsbB, PsbC, PsbD, PsbE, PsbF, PsbH, PsbI, PsbJ, PsbK, PsbL, PsbM, PsbT, PsbX, PsbY, PsbZ, Psb30/Ycf12, at least 3 peripheral proteins of the oxygen-evolving complex and a large number of cofactors. It forms dimeric complexes. It depends on The D1/D2 heterodimer binds P680, chlorophylls that are the primary electron donor of PSII, and subsequent electron acceptors. It shares a non-heme iron and each subunit binds pheophytin, quinone, additional chlorophylls, carotenoids and lipids. D1 provides most of the ligands for the Mn4-Ca-O5 cluster of the oxygen-evolving complex (OEC). There is also a Cl(-1) ion associated with D1 and D2, which is required for oxygen evolution. The PSII complex binds additional chlorophylls, carotenoids and specific lipids. as a cofactor. Post-translationally, tyr-161 forms a radical intermediate that is referred to as redox-active TyrZ, YZ or Y-Z. C-terminally processed by CTPA; processing is essential to allow assembly of the oxygen-evolving complex and thus photosynthetic growth.

It localises to the plastid. It is found in the chloroplast thylakoid membrane. The catalysed reaction is 2 a plastoquinone + 4 hnu + 2 H2O = 2 a plastoquinol + O2. Its function is as follows. Photosystem II (PSII) is a light-driven water:plastoquinone oxidoreductase that uses light energy to abstract electrons from H(2)O, generating O(2) and a proton gradient subsequently used for ATP formation. It consists of a core antenna complex that captures photons, and an electron transfer chain that converts photonic excitation into a charge separation. The D1/D2 (PsbA/PsbD) reaction center heterodimer binds P680, the primary electron donor of PSII as well as several subsequent electron acceptors. This chain is Photosystem II protein D1, found in Lemna minor (Common duckweed).